The sequence spans 220 residues: MNKTLIINAHPKVDDTSSVSIKVFKHFLESYKELISNNETIEQINLYDDVVPMIDKTVLSAWEKQGNGQELTREEQKVTERMSEILQQFKSANTYVIVLPLHNFNIPSKLKDYMDNIMIARETFKYTETGSVGLLKDGRRMLVIQASGGIYTNDDWYTDVEYSHKYLKAMFNFLGIEDYQIVRAQGTAVLDPTEVLQNAYKEVEEAASRLANKYIFSLEE.

Residue 18 to 20 (SVS) participates in FMN binding.

This sequence belongs to the azoreductase type 1 family. Homodimer. FMN is required as a cofactor.

The catalysed reaction is 2 a quinone + NADH + H(+) = 2 a 1,4-benzosemiquinone + NAD(+). It catalyses the reaction N,N-dimethyl-1,4-phenylenediamine + anthranilate + 2 NAD(+) = 2-(4-dimethylaminophenyl)diazenylbenzoate + 2 NADH + 2 H(+). Its function is as follows. Quinone reductase that provides resistance to thiol-specific stress caused by electrophilic quinones. In terms of biological role, also exhibits azoreductase activity. Catalyzes the reductive cleavage of the azo bond in aromatic azo compounds to the corresponding amines. The sequence is that of FMN-dependent NADH:quinone oxidoreductase 1 from Bacillus anthracis.